The primary structure comprises 1115 residues: G-protein coupled receptor GRL101 (1115 aa).

An N-terminal signal peptide occupies residues 1 to 24; the sequence is MATMSGTTIVCLIYLTTMLGNSQG. Residues 25-767 are Extracellular-facing; it reads VNLKIESPSP…SCEDLMSNHV (743 aa). LDL-receptor class A domains are found at residues 36–79, 77–115, 116–155, 156–196, 195–232, 231–269, 272–318, 320–363, 365–403, 404–442, 444–485, and 486–525; these read TLCS…TCGC, CGCL…ECDI, YICP…ICER, RECV…ACDS, DSDK…NCKL, KLCD…VCAN, YGCP…YCSN, SECK…SCLA, PKCS…NCEN, HQCA…DCDP, PVCE…NCSQ, and HICL…NCRY. Disulfide bonds link cysteine 38–cysteine 53, cysteine 46–cysteine 66, cysteine 60–cysteine 77, cysteine 79–cysteine 91, cysteine 86–cysteine 104, cysteine 98–cysteine 113, cysteine 118–cysteine 131, cysteine 138–cysteine 153, cysteine 158–cysteine 170, cysteine 165–cysteine 183, cysteine 177–cysteine 194, cysteine 202–cysteine 220, cysteine 214–cysteine 230, cysteine 233–cysteine 245, cysteine 240–cysteine 258, and cysteine 252–cysteine 267. Asparagine 87 carries N-linked (GlcNAc...) asparagine glycosylation. The N-linked (GlcNAc...) asparagine glycan is linked to asparagine 166. A glycan (N-linked (GlcNAc...) asparagine) is linked at asparagine 269. Intrachain disulfides connect cysteine 274-cysteine 291, cysteine 282-cysteine 304, and cysteine 298-cysteine 316. Residue asparagine 318 is glycosylated (N-linked (GlcNAc...) asparagine). 15 disulfide bridges follow: cysteine 322–cysteine 339, cysteine 334–cysteine 352, cysteine 346–cysteine 361, cysteine 367–cysteine 379, cysteine 374–cysteine 392, cysteine 386–cysteine 401, cysteine 406–cysteine 418, cysteine 413–cysteine 431, cysteine 425–cysteine 440, cysteine 446–cysteine 458, cysteine 453–cysteine 474, cysteine 465–cysteine 483, cysteine 488–cysteine 500, cysteine 495–cysteine 513, and cysteine 507–cysteine 523. The N-linked (GlcNAc...) asparagine glycan is linked to asparagine 482. Asparagine 502 carries an N-linked (GlcNAc...) asparagine glycan. An LRRNT domain is found at 518–562; sequence WDENNCRYWCPHGQAICQCEGVTMDCTGQKLKEMPVQQMEEDLSK. The N-linked (GlcNAc...) asparagine glycan is linked to asparagine 571. 6 LRR repeats span residues 584-605, 608-629, 632-653, 656-677, 680-701, and 704-725; these read KVTY…SFQN, KLTH…SLLG, NLKQ…TFSS, HLTV…MFKG, QITV…AFNN, and NVRL…VFMG. 2 N-linked (GlcNAc...) asparagine glycosylation sites follow: asparagine 618 and asparagine 624. N-linked (GlcNAc...) asparagine glycosylation is present at asparagine 685. Residues 768–788 form a helical membrane-spanning segment; sequence LRVSIWVLGVIALVGNFVVIF. Topologically, residues 789–801 are cytoplasmic; that stretch reads WRVRDFRGGKVHS. Residues 802–822 traverse the membrane as a helical segment; it reads FLITNLAIGDFLMGVYLLIIA. The Extracellular segment spans residues 823 to 857; it reads TADTYYRGVYISHDENWKQSGLCQFAGFVSTFSSE. Residues 858–878 traverse the membrane as a helical segment; that stretch reads LSVLTLSTITLDRLICILFPL. Residues 879 to 887 lie on the Cytoplasmic side of the membrane; that stretch reads RRTRLGLRQ. A helical membrane pass occupies residues 888–908; it reads AIIVMSCIWVLVFLLAVLPLL. Topologically, residues 909–941 are extracellular; it reads GFSYFENFYGRSGVCLALHVTPDRRPGWEYSVG. The helical transmembrane segment at 942 to 962 threads the bilayer; that stretch reads VFILLNLLSFVLIASSYLWMF. Residues 963-988 are Cytoplasmic-facing; it reads SVAKKTRSAVRTAESKNDNAMARRMT. Residues 989 to 1009 traverse the membrane as a helical segment; it reads LIVMTDFCCWVPIIVLGFVSL. The Extracellular portion of the chain corresponds to 1010 to 1017; that stretch reads AGARADDQ. The chain crosses the membrane as a helical span at residues 1018-1038; sequence VYAWIAVFVLPLNSATNPVIY. The Cytoplasmic segment spans residues 1039-1115; that stretch reads TLSTAPFLGN…YYNTELHSDS (77 aa).

Belongs to the G-protein coupled receptor 1 family. In terms of tissue distribution, predominantly expressed in a small number of neurons within the central nervous system and to a lesser extent in the heart.

The protein localises to the cell membrane. Might directly transduce signals carried by large extracellular lipoprotein complexes into neuronal events. The sequence is that of G-protein coupled receptor GRL101 from Lymnaea stagnalis (Great pond snail).